The primary structure comprises 283 residues: Phosphate import ATP-binding protein PstB 1 (283 aa).

A compositionally biased stretch (acidic residues) spans 1–16 (MSSDDTTDPTADDESF). Positions 1–35 (MSSDDTTDPTADDESFTDSPVAGLEQSTTTRGSGR) are disordered. Residues 38 to 278 (ISARNINVWY…PSSERVENYI (241 aa)) form the ABC transporter domain. 70–77 (GPSGCGKS) contacts ATP.

It belongs to the ABC transporter superfamily. Phosphate importer (TC 3.A.1.7) family. As to quaternary structure, the complex is composed of two ATP-binding proteins (PstB), two transmembrane proteins (PstC and PstA) and a solute-binding protein (PstS).

It is found in the cell membrane. It carries out the reaction phosphate(out) + ATP + H2O = ADP + 2 phosphate(in) + H(+). Functionally, part of the ABC transporter complex PstSACB involved in phosphate import. Responsible for energy coupling to the transport system. The protein is Phosphate import ATP-binding protein PstB 1 of Natronomonas pharaonis (strain ATCC 35678 / DSM 2160 / CIP 103997 / JCM 8858 / NBRC 14720 / NCIMB 2260 / Gabara) (Halobacterium pharaonis).